A 145-amino-acid chain; its full sequence is UPF0735 ACT domain-containing protein CLD_1535 (145 aa).

In terms of domain architecture, ACT spans 69–144 (TIGLLLGHER…NVIKVDLIAM (76 aa)).

It belongs to the UPF0735 family.

The polypeptide is UPF0735 ACT domain-containing protein CLD_1535 (Clostridium botulinum (strain Okra / Type B1)).